We begin with the raw amino-acid sequence, 1255 residues long: Structural polyprotein (1255 aa).

The interval 1-33 (MFPFQPMYPMQPMPYRNPFAAPRRPWFPRTDPF) is necessary for nucleocapsid assembly and virus assembly. Positions 33 to 68 (FLAMQVQELTRSMANLTFKQRRDAPPEGPPAKKPKR) are host transcription inhibition. Positions 41-48 (LTRSMANL) match the Supraphysiological nuclear export signal motif. The interval 44-119 (SMANLTFKQR…KKPGKRQRMV (76 aa)) is disordered. A Nuclear localization signal motif is present at residues 64–68 (KKPKR). The segment covering 80 to 92 (GKKKKNQGKKKAK) has biased composition (basic residues). Residues 91-127 (AKTGPPNPKAQSGNKKKPNKKPGKRQRMVMKLESDKT) are binding to the viral RNA. Threonine 93 is modified (phosphothreonine). The span at 104–118 (NKKKPNKKPGKRQRM) shows a compositional bias: basic residues. Residues 112 to 126 (PGKRQRMVMKLESDK) form a ribosome-binding region. A Phosphoserine modification is found at serine 124. One can recognise a Peptidase S3 domain in the interval 126 to 275 (KTFPIMLEGK…KYTPENCEQW (150 aa)). Threonine 127 carries the post-translational modification Phosphothreonine. Histidine 152 serves as the catalytic Charge relay system. The segment at 168–173 (KKASKY) is interaction with spike glycoprotein E2. Catalysis depends on charge relay system residues aspartate 174 and serine 226. The interval 260–264 (EKGVT) is interaction with spike glycoprotein E2. Residues 276 to 287 (SLVTTMCLLANV) form a functions as an uncleaved signal peptide for the precursor of protein E3/E2 region. Over 276–701 (SLVTTMCLLA…HYYHRYPMST (426 aa)) the chain is Extracellular. 7 disulfide bridges follow: cysteine 282–cysteine 291, cysteine 353–cysteine 457, cysteine 356–cysteine 361, cysteine 424–cysteine 438, cysteine 485–cysteine 600, cysteine 534–cysteine 560, and cysteine 536–cysteine 554. The N-linked (GlcNAc...) asparagine; by host glycan is linked to asparagine 286. Asparagine 652 carries an N-linked (GlcNAc...) asparagine; by host glycan. Residues 702–722 (ILGLSICAAIVTVSVAASTWL) traverse the membrane as a helical segment. The Cytoplasmic segment spans residues 723 to 757 (FCKSRVSCLTPYRLTPNARMPLCLAVLCCARTARA). The segment at 725–729 (KSRVS) is interaction with the capsid protein. Residues cysteine 730, cysteine 750, and cysteine 751 are each lipidated (S-palmitoyl cysteine; by host). The tract at residues 730–750 (CLTPYRLTPNARMPLCLAVLC) is transient transmembrane before p62-6K protein processing. Cysteine 730 and cysteine 751 are disulfide-bonded. The Extracellular segment spans residues 758–769 (ETTWESLDHLWN). The helical transmembrane segment at 770-790 (NNQQMFWIQLLIPLAALIVVT) threads the bilayer. A topological domain (cytoplasmic) is located at residue arginine 791. A helical transmembrane segment spans residues 792–812 (LLKCVCCVVPFLVVAGAAGAG). Over 813–1225 (AYEHATTMPS…SKTAWTWLTS (413 aa)) the chain is Extracellular. 4 disulfide bridges follow: cysteine 862–cysteine 927, cysteine 875–cysteine 907, cysteine 876–cysteine 909, and cysteine 881–cysteine 891. Residues 897–914 (VYPFMWGGAYCFCDTENT) form an E1 fusion peptide loop region. N-linked (GlcNAc...) asparagine; by host glycosylation is found at asparagine 947 and asparagine 1083. 4 cysteine pairs are disulfide-bonded: cysteine 1072–cysteine 1084, cysteine 1114–cysteine 1189, cysteine 1119–cysteine 1193, and cysteine 1141–cysteine 1183. The chain crosses the membrane as a helical span at residues 1226–1246 (LLGGSAVIIIIGLVLATIVAM). Residues 1247 to 1255 (YVLTNQKHN) lie on the Cytoplasmic side of the membrane.

Homodimer. Homomultimer. Interacts with host karyopherin KPNA4; this interaction allows the nuclear import of the viral capsid protein. Interacts with spike glycoprotein E2. Interacts with host IRAK1; the interaction leads to inhibition of IRAK1-dependent signaling. Part of a tetrameric complex composed of host CRM1, host importin alpha/beta dimer and the viral capsid; this complex blocks the receptor-mediated transport through the nuclear pore. Interacts with host phosphatase PPP1CA; this interaction dephosphorylates the capsid protein, which increases its ability to bind to the viral genome. As to quaternary structure, the precursor of protein E3/E2 and E1 form a heterodimer shortly after synthesis. In terms of assembly, interacts with spike glycoprotein E2. The precursor of protein E3/E2 and E1 form a heterodimer shortly after synthesis. Processing of the precursor of protein E3/E2 into E2 and E3 results in a heterodimer of the spike glycoproteins E2 and E1. Spike at virion surface are constituted of three E2-E1 heterodimers. After target cell attachment and endocytosis, E1 change conformation to form homotrimers. Interacts with 6K protein. Interacts with host LDLRAD3; this interaction mediates viral entry to the host cell. Interacts with spike glycoprotein E1. Processing of the precursor of protein E3/E2 into E2 and E3 results in a heterodimer of the spike glycoproteins E2 and E1. Spike at virion surface are constituted of a trimer of E2-E1 heterodimers. Interacts with 6K protein. Interacts with host LDLRAD3; this interaction mediates viral entry to the host cell. As to quaternary structure, oligomer. Interacts with spike glycoprotein E1. Interacts with spike glycoprotein E2. Post-translationally, structural polyprotein: Specific enzymatic cleavages in vivo yield mature proteins. Capsid protein is auto-cleaved during polyprotein translation, unmasking a signal peptide at the N-terminus of the precursor of E3/E2. The remaining polyprotein is then targeted to the host endoplasmic reticulum, where host signal peptidase cleaves it into pE2, 6K and E1 proteins. pE2 is further processed to mature E3 and E2 by host furin in trans-Golgi vesicle. In terms of processing, phosphorylated on serine and threonine residues. Palmitoylated via thioester bonds. These palmitoylations may induce disruption of the C-terminus transmembrane. This would result in the reorientation of E2 C-terminus from lumenal to cytoplasmic side. Post-translationally, N-glycosylated. In terms of processing, palmitoylated via thioester bonds.

It is found in the virion. The protein resides in the host cytoplasm. It localises to the host cell membrane. Its subcellular location is the host nucleus. The protein localises to the virion membrane. It is found in the host Golgi apparatus. The protein resides in the host trans-Golgi network. It localises to the host endoplasmic reticulum. The enzyme catalyses Autocatalytic release of the core protein from the N-terminus of the togavirus structural polyprotein by hydrolysis of a -Trp-|-Ser- bond.. Forms an icosahedral capsid with a T=4 symmetry composed of 240 copies of the capsid protein surrounded by a lipid membrane through which penetrate 80 spikes composed of trimers of E1-E2 heterodimers. The capsid protein binds to the viral RNA genome at a site adjacent to a ribosome binding site for viral genome translation following genome release. Possesses a protease activity that results in its autocatalytic cleavage from the nascent structural protein. Following its self-cleavage, the capsid protein transiently associates with ribosomes, and within several minutes the protein binds to viral RNA and rapidly assembles into icosahedric core particles. The resulting nucleocapsid eventually associates with the cytoplasmic domain of the spike glycoprotein E2 at the cell membrane, leading to budding and formation of mature virions. In case of infection, new virions attach to target cells and after clathrin-mediated endocytosis their membrane fuses with the host endosomal membrane. This leads to the release of the nucleocapsid into the cytoplasm, followed by an uncoating event necessary for the genomic RNA to become accessible. The uncoating might be triggered by the interaction of capsid proteins with ribosomes. Binding of ribosomes would release the genomic RNA since the same region is genomic RNA-binding and ribosome-binding. Specifically inhibits interleukin-1 receptor-associated kinase 1/IRAK1-dependent signaling during viral entry, representing a means by which the alphaviruses may evade innate immune detection and activation prior to viral gene expression. Inhibits host transcription. Forms a tetrameric complex with XPO1/CRM1 and the nuclear import receptor importin. This complex blocks the central channel of host nuclear pores thereby inhibiting the receptor-mediated nuclear transport and thus the host mRNA and rRNA transcription. The inhibition of transcription is linked to a cytopathic effect on the host cell. In terms of biological role, provides the signal sequence for the translocation of the precursor of protein E3/E2 to the host endoplasmic reticulum. Furin-cleaved E3 remains associated with spike glycoprotein E1 and mediates pH protection of the latter during the transport via the secretory pathway. After virion release from the host cell, the assembly protein E3 is gradually released in the extracellular space. Functionally, plays a role in viral attachment to target host cell, by binding to the cell receptor LDLRAD3. Synthesized as a p62 precursor which is processed by furin at the cell membrane just before virion budding, giving rise to E2-E1 heterodimer. The p62-E1 heterodimer is stable, whereas E2-E1 is unstable and dissociate at low pH. p62 is processed at the last step, presumably to avoid E1 fusion activation before its final export to cell surface. E2 C-terminus contains a transitory transmembrane that would be disrupted by palmitoylation, resulting in reorientation of the C-terminal tail from lumenal to cytoplasmic side. This step is critical since E2 C-terminus is involved in budding by interacting with capsid proteins. This release of E2 C-terminus in cytoplasm occurs lately in protein export, and precludes premature assembly of particles at the endoplasmic reticulum membrane. Its function is as follows. Acts as a viroporin that participates in virus glycoprotein processing and transport to the plasma membrane, cell permeabilization and budding of viral particles. Disrupts the calcium homeostasis of the cell, probably at the endoplasmic reticulum level. This leads to cytoplasmic calcium elevation. Because of its lipophilic properties, the 6K protein is postulated to influence the selection of lipids that interact with the transmembrane domains of the glycoproteins, which, in turn, affects the deformability of the bilayer required for the extreme curvature that occurs as budding proceeds. Present in low amount in virions, about 3% compared to viral glycoproteins. Class II viral fusion protein. Fusion activity is inactive as long as E1 is bound to E2 in mature virion. After virus attachment to cell receptor LDLRAD3 and endocytosis, acidification of the endosome induce dissociation of E1/E2 heterodimer and concomitant trimerization of the E1 subunits. This E1 trimer is fusion active, and promotes release of viral nucleocapsid in cytoplasm after endosome and viral membrane fusion. Efficient fusion requires the presence of cholesterol and sphingolipid in the target membrane. The chain is Structural polyprotein from Venezuelan equine encephalitis virus (strain P676) (VEEV).